We begin with the raw amino-acid sequence, 872 residues long: Protein SEY1 (872 aa).

Topologically, residues 1–749 are cytoplasmic; it reads MVANGHFAGV…KRSAIGGITQ (749 aa). The region spanning 49–307 is the GB1/RHD3-type G domain; it reads GFNYHLISVF…IPADGFAVYA (259 aa). 59–66 lines the GTP pocket; it reads GSQSTGKS. The stretch at 482 to 504 forms a coiled coil; that stretch reads SNYQQELSLYQKDLENIGGQLRR. The segment at 676-704 is disordered; sequence LDKWIGHTPSSATPADEEDLTPIGGVDED. Positions 690–704 are enriched in acidic residues; the sequence is ADEEDLTPIGGVDED. A helical transmembrane segment spans residues 750–770; that stretch reads VPLYFYGLLLALGWNEIVAVL. The Lumenal segment spans residues 771 to 773; the sequence is RNP. Residues 774 to 794 traverse the membrane as a helical segment; sequence AYFLLLFVCAVTAYVTYQLNL. Over 795–872 the chain is Cytoplasmic; it reads WGPIIKMTEA…IDDADDDDDF (78 aa). The interval 849–872 is disordered; sequence NRKSAGGFQNNRSHIDDADDDDDF.

The protein belongs to the TRAFAC class dynamin-like GTPase superfamily. GB1/RHD3 GTPase family. RHD3 subfamily.

Its subcellular location is the endoplasmic reticulum membrane. In terms of biological role, cooperates with the reticulon proteins and tubule-shaping DP1 family proteins to generate and maintain the structure of the tubular endoplasmic reticulum network. Has GTPase activity, which is required for its function in ER organization. The chain is Protein SEY1 from Paracoccidioides brasiliensis (strain Pb18).